A 446-amino-acid chain; its full sequence is MADYLTVTHLTKYLKLKFDRDPYLERVYLTGQVSNFRKRPTHQYFSLKDESAVIQATMWAGVYKKLGFDLEEGMKINVIGRVQLYEPSGSYSIVIEKAEPDGIGALALQFEQLKKKLTAEGYFEQKHKQPLPQFVSKIGVITSPSGAVIRDIITTVSRRFPGVEILLFPTKVQGDGAAQEVVANIRRANQREDLDLLIVGRGGGSIEDLWAFNEEIVVQAIFESQLPVISSVGHETDTTLADFVADRRAATPTAAAELATPITKTDLMSWIVERQNRSYQACLRRIKQRQEWVDKLSQSVIFRQPERLYDAYLQKIDRLSMTLMNTMKDRLSSAKENKVQLDHALANSQLQTKIERYQDRVATAKRLLMANMASQYDSQLARFEKAQDALLSLDTSRIIARGYAMIEKNQALVASVSQITKGDQLTIKMRDGQLDVEVKDVKNENI.

The protein belongs to the XseA family. Heterooligomer composed of large and small subunits.

It localises to the cytoplasm. The enzyme catalyses Exonucleolytic cleavage in either 5'- to 3'- or 3'- to 5'-direction to yield nucleoside 5'-phosphates.. Its function is as follows. Bidirectionally degrades single-stranded DNA into large acid-insoluble oligonucleotides, which are then degraded further into small acid-soluble oligonucleotides. The chain is Exodeoxyribonuclease 7 large subunit from Streptococcus pyogenes serotype M49 (strain NZ131).